The sequence spans 128 residues: Small ribosomal subunit protein uS12 (128 aa).

At D89 the chain carries 3-methylthioaspartic acid.

This sequence belongs to the universal ribosomal protein uS12 family. As to quaternary structure, part of the 30S ribosomal subunit. Contacts proteins S8 and S17. May interact with IF1 in the 30S initiation complex.

With S4 and S5 plays an important role in translational accuracy. In terms of biological role, interacts with and stabilizes bases of the 16S rRNA that are involved in tRNA selection in the A site and with the mRNA backbone. Located at the interface of the 30S and 50S subunits, it traverses the body of the 30S subunit contacting proteins on the other side and probably holding the rRNA structure together. The combined cluster of proteins S8, S12 and S17 appears to hold together the shoulder and platform of the 30S subunit. The chain is Small ribosomal subunit protein uS12 from Campylobacter jejuni subsp. jejuni serotype O:6 (strain 81116 / NCTC 11828).